The primary structure comprises 408 residues: Phosphoglycerate kinase (408 aa).

Substrate is bound by residues D22 to N24, R39, H60 to R63, R117, and R157. ATP-binding positions include E332 and G358 to T361.

Belongs to the phosphoglycerate kinase family. In terms of assembly, monomer.

It is found in the cytoplasm. It catalyses the reaction (2R)-3-phosphoglycerate + ATP = (2R)-3-phospho-glyceroyl phosphate + ADP. The protein operates within carbohydrate degradation; glycolysis; pyruvate from D-glyceraldehyde 3-phosphate: step 2/5. This is Phosphoglycerate kinase from Thermoplasma volcanium (strain ATCC 51530 / DSM 4299 / JCM 9571 / NBRC 15438 / GSS1).